The chain runs to 248 residues: 14-3-3 protein homolog 2 (248 aa).

This sequence belongs to the 14-3-3 family.

The polypeptide is 14-3-3 protein homolog 2 (Echinococcus multilocularis (Fox tapeworm)).